The following is a 486-amino-acid chain: Glutamyl-tRNA(Gln) amidotransferase subunit A (486 aa).

Active-site charge relay system residues include K79 and S154. Catalysis depends on S178, which acts as the Acyl-ester intermediate.

Belongs to the amidase family. GatA subfamily. As to quaternary structure, heterotrimer of A, B and C subunits.

The enzyme catalyses L-glutamyl-tRNA(Gln) + L-glutamine + ATP + H2O = L-glutaminyl-tRNA(Gln) + L-glutamate + ADP + phosphate + H(+). Functionally, allows the formation of correctly charged Gln-tRNA(Gln) through the transamidation of misacylated Glu-tRNA(Gln) in organisms which lack glutaminyl-tRNA synthetase. The reaction takes place in the presence of glutamine and ATP through an activated gamma-phospho-Glu-tRNA(Gln). The chain is Glutamyl-tRNA(Gln) amidotransferase subunit A from Dehalococcoides mccartyi (strain CBDB1).